The sequence spans 813 residues: Origin of replication complex subunit 1B (813 aa).

The tract at residues 1–109 (MASTPRAKTF…TPKKKKKIDS (109 aa)) is disordered. A compositionally biased stretch (polar residues) spans 11-21 (KSPTKTPSNIY). A compositionally biased stretch (low complexity) spans 27 to 41 (SPSSTSHTPQTPETH). Residues 43 to 52 (PLRRSARHVS) show a composition bias toward basic residues. The short motif at 83 to 90 (PRKPTTDV) is the Nuclear localization signal element. Residues 163–187 (DPEIEDCQICFKSDTNIMIECDDCL) are histone H3 binding. The PHD-type zinc-finger motif lies at 166–215 (IEDCQICFKSDTNIMIECDDCLGGFHLKCLKPPLKEVPEGDWICQFCEVK). The Zn(2+) site is built by C169, C172, C183, C186, H191, and C194. The histone H3 binding stretch occupies residues 203–207 (PEGDW). C209 and C212 together coordinate Zn(2+). Positions 226-344 (PKPPEGKKLA…VHWRSFKRLA (119 aa)) constitute a BAH domain. Residues 319–324 (ASNDGD) are histone H3 binding. Positions 349-372 (GDSDSDQEWNGRKEEEVDDSDEEM) are disordered. The segment at 436 to 803 (PKSLPCRSKE…DDVAFALKDN (368 aa)) is necessary and sufficient for ORC complex assembly. Position 471 to 479 (471 to 479 (GVPGTGKTI)) interacts with ATP. Positions 561 and 562 each coordinate Mg(2+). ATP is bound by residues E562, N595, and R660.

Belongs to the ORC1 family. Component of the origin recognition complex (ORC) composed of at least ORC1 (ORC1A or ORC1B), ORC2, ORC3, ORC4, ORC5 and ORC6. ORC is regulated in a cell-cycle and development dependent manner. It is sequentially assembled at the exit from anaphase of mitosis and disassembled as cells enter S phase. Interacts directly with ORC2 and ORC5. Binds mostly unmodified histone H3, and, with lower efficiency, H3K4me1 H3K4me2 and H3K4me3. Follow a cell-cycle regulation with a peak at the G1/S-phase. Mostly expressed in flower buds, and, to a lower exent, in roots, leaves and stems.

The protein localises to the nucleus. Functionally, essential protein required for ovules fertilization. Component of the origin recognition complex (ORC) that binds origins of replication. It has a role in both chromosomal replication and mating type transcriptional silencing. Binds to the ARS consensus sequence (ACS) of origins of replication. H3K4me3 effector that positively regulates the transcription of a subset of genes. This Arabidopsis thaliana (Mouse-ear cress) protein is Origin of replication complex subunit 1B.